Here is a 525-residue protein sequence, read N- to C-terminus: Mitoguardin (525 aa).

Residues 26 to 45 (VVLFSLTAGVALMSVLSRFL) form a helical membrane-spanning segment. Residues 47–67 (RRKPPRPPRRARKYTGRRNRN) show a composition bias toward basic residues. Disordered stretches follow at residues 47 to 73 (RRKPPRPPRRARKYTGRRNRNSMRSPN) and 210 to 239 (DEAEEEAGEADDDRRSRKSGSVLSRAGSDP). A compositionally biased stretch (acidic residues) spans 211–220 (EAEEEAGEAD).

This sequence belongs to the mitoguardin family. In terms of assembly, interacts with zuc.

The protein resides in the mitochondrion outer membrane. Functionally, regulator of mitochondrial fusion required to maintain neuronal homeostasis. In Drosophila melanogaster (Fruit fly), this protein is Mitoguardin.